Consider the following 375-residue polypeptide: Citrate synthase (375 aa).

Active-site residues include His266 and Asp317.

Belongs to the citrate synthase family. Homohexamer.

It carries out the reaction oxaloacetate + acetyl-CoA + H2O = citrate + CoA + H(+). Its pathway is carbohydrate metabolism; tricarboxylic acid cycle; isocitrate from oxaloacetate: step 1/2. Allosterically inhibited by NADH. This is Citrate synthase (gltA) from Mycolicibacterium smegmatis (Mycobacterium smegmatis).